Here is a 417-residue protein sequence, read N- to C-terminus: Gamma-glutamyl phosphate reductase (417 aa).

It belongs to the gamma-glutamyl phosphate reductase family.

It localises to the cytoplasm. The catalysed reaction is L-glutamate 5-semialdehyde + phosphate + NADP(+) = L-glutamyl 5-phosphate + NADPH + H(+). Its pathway is amino-acid biosynthesis; L-proline biosynthesis; L-glutamate 5-semialdehyde from L-glutamate: step 2/2. Catalyzes the NADPH-dependent reduction of L-glutamate 5-phosphate into L-glutamate 5-semialdehyde and phosphate. The product spontaneously undergoes cyclization to form 1-pyrroline-5-carboxylate. This chain is Gamma-glutamyl phosphate reductase, found in Enterobacter sp. (strain 638).